The following is a 426-amino-acid chain: Gamma-glutamylputrescine oxidoreductase (426 aa).

The protein belongs to the gamma-glutamylputrescine oxidoreductase family.

The enzyme catalyses gamma-L-glutamylputrescine + O2 + H2O = 4-(gamma-L-glutamylamino)butanal + H2O2 + NH4(+). It functions in the pathway amine and polyamine degradation; putrescine degradation; 4-aminobutanoate from putrescine: step 2/4. In terms of biological role, involved in the breakdown of putrescine via the oxidation of L-glutamylputrescine. The sequence is that of Gamma-glutamylputrescine oxidoreductase (puuB) from Escherichia coli (strain K12).